Reading from the N-terminus, the 545-residue chain is Purple acid phosphatase 13 (545 aa).

The N-terminal stretch at 1–25 is a signal peptide; sequence MVVKYTMSMSFFVIFASTVTIIVHG. Residues asparagine 125 and asparagine 145 are each glycosylated (N-linked (GlcNAc...) asparagine). Aspartate 203 contacts Fe cation. N-linked (GlcNAc...) asparagine glycosylation is present at asparagine 209. Tyrosine 233 lines the Fe cation pocket. N-linked (GlcNAc...) asparagine glycosylation is found at asparagine 240, asparagine 254, asparagine 306, asparagine 321, asparagine 351, and asparagine 367. Residue histidine 389 is the Proton donor of the active site. Histidine 416 serves as a coordination point for Zn(2+). 416 to 418 contacts substrate; it reads HVD. N-linked (GlcNAc...) asparagine glycosylation is found at asparagine 428, asparagine 466, asparagine 475, and asparagine 510.

The protein belongs to the metallophosphoesterase superfamily. Purple acid phosphatase family. In terms of assembly, homodimer. The cofactor is Fe cation. Zn(2+) is required as a cofactor. In terms of tissue distribution, expressed in stems, leaves, flowers and siliques.

Its subcellular location is the secreted. It carries out the reaction a phosphate monoester + H2O = an alcohol + phosphate. This chain is Purple acid phosphatase 13 (PAP13), found in Arabidopsis thaliana (Mouse-ear cress).